The primary structure comprises 450 residues: Tyrosine-protein kinase CSK (450 aa).

Serine 2 is subject to N-acetylserine. The SH3 domain maps to 9-70 (PSGTECIAKY…PANYVQKREG (62 aa)). The tract at residues 9–70 (PSGTECIAKY…PANYVQKREG (62 aa)) is interaction with PTPN22. Positions 82–171 (WFHGKITREQ…GLCTRLIKPK (90 aa)) constitute an SH2 domain. Residue tyrosine 184 is modified to Phosphotyrosine. The Protein kinase domain maps to 195 to 449 (LKLLQTIGKG…LEHIKTHELH (255 aa)). ATP-binding positions include 201–209 (IGKGEFGDV) and lysine 222. Tyrosine 304 carries the post-translational modification Phosphotyrosine. The active-site Proton acceptor is the aspartate 314. Position 364 is a phosphoserine; by PKA (serine 364). Residue tyrosine 416 is modified to Phosphotyrosine; by autocatalysis.

This sequence belongs to the protein kinase superfamily. Tyr protein kinase family. CSK subfamily. In terms of assembly, homodimer (via SH3-domain). Interacts with PTPN22. Interacts with phosphorylated SIT1, PAG1, LIME1 and TGFB1I1; these interactions serve to recruit CSK to the membrane where it can phosphorylate and inhibit Src-family kinases. Interacts with SRCIN1. Interacts with RHOH. Interacts (via SH2 domain) with SCIMP; this interaction is dependent on phosphorylation of SCIMP 'Tyr-107'. Interacts (via SH2 domain) with PRAG1 (when phosphorylated at 'Tyr-391'); this interaction prevents translocation of CSK from the cytoplasm to the membrane leading to increased activity of CSK. Interacts with LRRK1. The cofactor is Mg(2+). Mn(2+) is required as a cofactor. In terms of processing, phosphorylated at Ser-364 by PKA, leading to increased activity. Autophosphorylated. Expressed in lung and macrophages.

The protein localises to the cytoplasm. Its subcellular location is the cell membrane. The catalysed reaction is L-tyrosyl-[protein] + ATP = O-phospho-L-tyrosyl-[protein] + ADP + H(+). In terms of biological role, non-receptor tyrosine-protein kinase that plays an important role in the regulation of cell growth, differentiation, migration and immune response. Phosphorylates tyrosine residues located in the C-terminal tails of Src-family kinases (SFKs) including LCK, SRC, HCK, FYN, LYN, CSK or YES1. Upon tail phosphorylation, Src-family members engage in intramolecular interactions between the phosphotyrosine tail and the SH2 domain that result in an inactive conformation. To inhibit SFKs, CSK is recruited to the plasma membrane via binding to transmembrane proteins or adapter proteins located near the plasma membrane. Suppresses signaling by various surface receptors, including T-cell receptor (TCR) and B-cell receptor (BCR) by phosphorylating and maintaining inactive several positive effectors such as FYN or LCK. This chain is Tyrosine-protein kinase CSK (CSK), found in Homo sapiens (Human).